The chain runs to 770 residues: MDFSKFLADDFDVKDWINAAFRAGPKDGAAGKADGHAATLVMKLQLFIQEVNHAVEETSLQALQNMPKVLRDVEALKQEASFLKEQMILVKEDIKKFEQDTSQSMQVLVEIDQVKSRMQLAAESLQEADKWSTLSADIEETFKTQDIAVISAKLTGMQNSLMMLVDTPDYSEKCVHLEALKNRLEALASPQIVAAFTSQSVDQSKVFVKVFTEIDRMPQLLAYYYKCHKVQLLATWQELCQSDLPLDRQLTGLYDALLGAWHTQTQWATQVFKNPHEVVTVLLIQTLGALVPSLPMCLSAAVERAGPELELTRLLEFYDTTAHFAKGLEMALLPHLQDHNLVKVVELVDAVYGPYKPFQLKYGDMEENNLLIQISAVPLEHGEVIDCVQELSHSVHKLFGLASAAVDRCAKFTNGLGTCGLLTALKSLFAKYVSHFTNALQSIRKKCKLDDIPPNSLFQEDWTAFQNSVRIIATCGELLRQCGDFEQQLANRILSTAGKYLSDSYSPRSLAGFQDSILTDKKSPAKNPWQEYNYLQKDNPAEYASLMEILYTLKEKGSSNHNLLSASRTALTRLNQQAHQLAFDSVFLRIKQQLLLVSRMDSWNTAGIGETLTDDLPAFSLTPLEYISNIGQYIMSLPLNLEPFVTQEDSALELALHAGKLPFPPEQGDELPELDNMADNWLGSIARATMQTYCDVILQIPEVTPHSTKQLATDIDYLINVMDALGLQPSRTLQNIAALLKAKPEEYRQVSKGLPRRLAATVATMRGVNY.

The protein belongs to the COG7 family. Component of the conserved oligomeric Golgi complex which is composed of eight different subunits and is required for normal Golgi morphology and localization.

Its subcellular location is the golgi apparatus membrane. In terms of biological role, required for normal Golgi function. The chain is Conserved oligomeric Golgi complex subunit 7 (Cog7) from Mus musculus (Mouse).